The chain runs to 97 residues: Large ribosomal subunit protein eL21 (97 aa).

Positions 1–24 (MQKSEGFRSKTRYKLQKHPRQKGM) are disordered. Residues 9–21 (SKTRYKLQKHPRQ) are compositionally biased toward basic residues.

It belongs to the eukaryotic ribosomal protein eL21 family.

The sequence is that of Large ribosomal subunit protein eL21 from Methanococcus maripaludis (strain DSM 14266 / JCM 13030 / NBRC 101832 / S2 / LL).